We begin with the raw amino-acid sequence, 880 residues long: Alanine--tRNA ligase (880 aa).

The Zn(2+) site is built by H571, H575, C673, and H677.

Belongs to the class-II aminoacyl-tRNA synthetase family. Zn(2+) serves as cofactor.

The protein resides in the cytoplasm. The enzyme catalyses tRNA(Ala) + L-alanine + ATP = L-alanyl-tRNA(Ala) + AMP + diphosphate. Its function is as follows. Catalyzes the attachment of alanine to tRNA(Ala) in a two-step reaction: alanine is first activated by ATP to form Ala-AMP and then transferred to the acceptor end of tRNA(Ala). Also edits incorrectly charged Ser-tRNA(Ala) and Gly-tRNA(Ala) via its editing domain. This Oleidesulfovibrio alaskensis (strain ATCC BAA-1058 / DSM 17464 / G20) (Desulfovibrio alaskensis) protein is Alanine--tRNA ligase.